We begin with the raw amino-acid sequence, 216 residues long: Calcium-binding protein 2 (216 aa).

A disordered region spans residues 1–41; sequence MGNCAKTPWHRGSKERWQWPGSPLGGSRPSPGPRTEEQEGT. A lipid anchor (N-myristoyl glycine) is attached at G2. Over residues 20–29 the composition is skewed to low complexity; the sequence is PGSPLGGSRP. 4 consecutive EF-hand domains span residues 74–109, 125–142, 148–183, and 185–216; these read EEIEELQIAFQEFDRDRDGYIGYRELGACMRTLGYM, GKVDFEDFVELMGPKLLA, IGVRELRDAFREFDTNGDGCISVGELRAALKALLGE, and LSQREVDEILQDIDLNGDGLVDFEEFVRMMSR. Residues D87, D89, D91, Y93, and E98 each coordinate Ca(2+). Residues D161, N163, D165, C167, E172, D198, N200, D202, and E209 each coordinate Ca(2+).

In terms of tissue distribution, expressed in the inner hair cells (IHCs), outer hair cells,(OHCs) and vestibular hair cells within the ear and in the retina (at protein level). Expressed in the retinal cone type 6 ON-bipolar cells and type 1 OFF-bipolar cells (at protein level). Expressed in the organ of Corti and spiral ganglion neurons in the cochlea (at protein level).

The protein localises to the cytoplasm. The protein resides in the perinuclear region. It is found in the cell membrane. Its subcellular location is the golgi apparatus. In terms of biological role, required for sound encoding at inner hair cells (IHCs) synapses, likely via inhibition of the inactivation of voltage-gated calcium channel of type 1.3 (Cav1.3) in the IHCs. Required for the normal transfer of light signals through the retina. This Mus musculus (Mouse) protein is Calcium-binding protein 2 (Cabp2).